We begin with the raw amino-acid sequence, 217 residues long: Glycosylphosphatidylinositol anchor biosynthesis protein 11 (217 aa).

The N-linked (GlcNAc...) asparagine glycan is linked to asparagine 20. The next 6 membrane-spanning stretches (helical) occupy residues 41–61 (VYVR…LYWF), 66–86 (DFNL…YLIF), 107–127 (FITL…IVLF), 139–159 (WLLA…VFNC), 169–189 (YFIS…LDWD), and 197–217 (VPLI…GGYI).

Belongs to the PIGF family.

The protein resides in the endoplasmic reticulum membrane. It participates in glycolipid biosynthesis; glycosylphosphatidylinositol-anchor biosynthesis. Functionally, acts in the GPI biosynthetic pathway between GlcNAc-PI synthesis and GPI transfer to protein. This is Glycosylphosphatidylinositol anchor biosynthesis protein 11 (GPI11) from Kluyveromyces lactis (strain ATCC 8585 / CBS 2359 / DSM 70799 / NBRC 1267 / NRRL Y-1140 / WM37) (Yeast).